The chain runs to 254 residues: L-arabinose 1-dehydrogenase (NAD(P)(+)) (254 aa).

Tyr-142 (proton acceptor) is an active-site residue. NAD(+) is bound by residues Tyr-142 and Lys-146.

It belongs to the NAD(P)-dependent epimerase/dehydratase family. As to quaternary structure, homotetramer.

It carries out the reaction alpha-L-arabinopyanose + NAD(+) = L-arabinono-1,4-lactone + NADH + H(+). It catalyses the reaction alpha-L-arabinopyanose + NADP(+) = L-arabinono-1,4-lactone + NADPH + H(+). It participates in carbohydrate degradation; L-arabinose degradation via L-arabinono-1,4-lactone pathway. Its function is as follows. L-AraDH initiates the degradation of L-arabinose. Catalyzes the NAD(P)(+)-dependent conversion of L-arabinose to L-arabino-gamma-lactone. It is highly specific for L-arabinose as substrate and can use both NADP(+) and NAD(+) as electron acceptor, with a slight preference for NADP(+). This chain is L-arabinose 1-dehydrogenase (NAD(P)(+)), found in Haloferax volcanii (strain ATCC 29605 / DSM 3757 / JCM 8879 / NBRC 14742 / NCIMB 2012 / VKM B-1768 / DS2) (Halobacterium volcanii).